We begin with the raw amino-acid sequence, 338 residues long: Ketol-acid reductoisomerase (NADP(+)) (338 aa).

In terms of domain architecture, KARI N-terminal Rossmann spans 1 to 181 (MNVYYDKDCD…GGGRSGIIET (181 aa)). NADP(+)-binding positions include 24–27 (YGSQ), Arg47, Ser50, Ser52, and 82–85 (DEFQ). His107 is an active-site residue. Residue Gly133 coordinates NADP(+). Residues 182–327 (TFKDETETDL…AKLRSMMPWI (146 aa)) enclose the KARI C-terminal knotted domain. 4 residues coordinate Mg(2+): Asp190, Glu194, Glu226, and Glu230. Ser251 contributes to the substrate binding site.

This sequence belongs to the ketol-acid reductoisomerase family. Mg(2+) serves as cofactor.

It catalyses the reaction (2R)-2,3-dihydroxy-3-methylbutanoate + NADP(+) = (2S)-2-acetolactate + NADPH + H(+). It carries out the reaction (2R,3R)-2,3-dihydroxy-3-methylpentanoate + NADP(+) = (S)-2-ethyl-2-hydroxy-3-oxobutanoate + NADPH + H(+). It participates in amino-acid biosynthesis; L-isoleucine biosynthesis; L-isoleucine from 2-oxobutanoate: step 2/4. Its pathway is amino-acid biosynthesis; L-valine biosynthesis; L-valine from pyruvate: step 2/4. In terms of biological role, involved in the biosynthesis of branched-chain amino acids (BCAA). Catalyzes an alkyl-migration followed by a ketol-acid reduction of (S)-2-acetolactate (S2AL) to yield (R)-2,3-dihydroxy-isovalerate. In the isomerase reaction, S2AL is rearranged via a Mg-dependent methyl migration to produce 3-hydroxy-3-methyl-2-ketobutyrate (HMKB). In the reductase reaction, this 2-ketoacid undergoes a metal-dependent reduction by NADPH to yield (R)-2,3-dihydroxy-isovalerate. The protein is Ketol-acid reductoisomerase (NADP(+)) of Psychrobacter sp. (strain PRwf-1).